The primary structure comprises 900 residues: MMPLAGIAWNLMLLFSAVQGLPLQDGEGTQHPDLLNNPPKGSVEPVALEQLVHQAILKKDFLAQDVFFPGTTAIPTRAAPISLTEGVSDASGVLTTAVGGAFSLPPQLSTLIPPSPAPTGGPGPSPEAEEETTTTLITTTTVTTVHSPVLCNNNISESEGLLEAPEYGGSTFFGGLDCTYSVSVYLGYGVEIRVERLNLSKEEALSIEGLEEDRRFLLANETLMAEGQVIRSPTNHVAVRFQTYRATSPGAFRLRYQAFVLSCVFPPRPENGEVTVTDLHPGGAANFRCSAGFTLKGGESLVCLNISRPEWSGKPPVCAASCGGVIRNATVGRIVSPDISTSHSNNHGNNLSCHWLIEAAEGQRLHLHFERVSLDEDNDRLVVRSGSSPLSPVIYDSDIDDVPERGLLSDAQSLYIELISDNPAVPLLLSLRYEVFSESRCYEPFLAHGNFTTTDPLYSPGSLVSFFCNAGYMLEQGPPVIECVDPADPHWNESEPVCKALCGGEISEPAGVILSPDWPQNYGKGQDCVWGIHVQEDRRVLLEIEILNIRRSDALTVYDGDDLTARVLGQYMGVHQRFNLFSSANDVTLQFQSDSNDPVFSLSQGFIIHFKEVPRNDTCPALPEVPNGWKTSSHPDLIRGTVVTYQCEPGYDISGSDILTCQWDLSWSNAPPTCEKILNCADPGEIANGVRRASDPRFPIGSHVQYSCNEGYTLEGSRTLTCYNRDTGTPKWSDRIPKCVLKYEPCLNPGVPENGYQTLYKHHYQAGEALRFFCYEGFELIGEVTITCAPGHPSQWTSQPPLCKVAYEELLDDRKLEVTQTTDPSHQMEGGNIALAIFLPIILVILLIGGIYIYYTKFQGKSLFGFSFPASHSYSPITVESDFNNPLYEAGDTREYEVSI.

The signal sequence occupies residues 1–20 (MMPLAGIAWNLMLLFSAVQG). Residues 111 to 130 (LIPPSPAPTGGPGPSPEAEE) form a disordered region. A compositionally biased stretch (pro residues) spans 113-125 (PPSPAPTGGPGPS). A disulfide bond links C151 and C178. A CUB 1 domain is found at 151-259 (CNNNISESEG…GAFRLRYQAF (109 aa)). N154, N198, and N220 each carry an N-linked (GlcNAc...) asparagine glycan. The 60-residue stretch at 261–320 (LSCVFPPRPENGEVTVTDLHPGGAANFRCSAGFTLKGGESLVCLNISRPEWSGKPPVCAA) folds into the Sushi 1 domain. 6 disulfide bridges follow: C263–C303, C289–C318, C322–C353, C441–C483, C468–C498, and C502–C528. N-linked (GlcNAc...) asparagine glycans are attached at residues N305, N328, N350, N450, and N492. The CUB 2 domain maps to 322–436 (CGGVIRNATV…LLLSLRYEVF (115 aa)). The Sushi 2 domain occupies 439–500 (SRCYEPFLAH…WNESEPVCKA (62 aa)). The 112-residue stretch at 502-613 (CGGEISEPAG…QGFIIHFKEV (112 aa)) folds into the CUB 3 domain. N616 carries N-linked (GlcNAc...) asparagine glycosylation. 3 Sushi domains span residues 617-676 (DTCP…TCEK), 678-741 (LNCA…KCVL), and 744-805 (EPCL…LCKV). 6 disulfide bridges follow: C619–C661, C647–C674, C680–C722, C708–C739, C746–C788, and C774–C803. A helical membrane pass occupies residues 833–853 (IALAIFLPIILVILLIGGIYI).

It belongs to the SEZ6 family.

The protein localises to the cell membrane. Its function is as follows. May play a role in cell-cell recognition and in neuronal membrane signaling. In Xenopus laevis (African clawed frog), this protein is Seizure protein 6 homolog (sez6).